The following is a 273-amino-acid chain: MSDMHSLLVAAILGVVEGLTEFLPVSSTGHMIIVGHLLGFEGDTAKTFEVVIQLGSILAVVVMFWRRLFGLIGIHFGRPLQHEGESKGRLTLIHILLGMIPAVVLGLLFHDAIKSLFNPINVMYALVVGGLLLIAAECLKPKEPRAPGLDDMTYRQAFMIGCFQCLALWPGFSRSGATISGGMLMGVSRYAASEFSFLLAVPMMMGATALDLYKSWGFLTTGDIPMFAVGFITAFVVALVAIKTFLQLIKRISFIPFAIYRFIVAAAVYVVFF.

7 consecutive transmembrane segments (helical) span residues 6–26, 45–65, 90–110, 116–136, 190–210, 222–242, and 252–272; these read SLLV…LPVS, AKTF…VMFW, LTLI…LLFH, LFNP…LIAA, YAAS…ATAL, GDIP…LVAI, and ISFI…YVVF.

The protein belongs to the UppP family.

It is found in the cell inner membrane. It carries out the reaction di-trans,octa-cis-undecaprenyl diphosphate + H2O = di-trans,octa-cis-undecaprenyl phosphate + phosphate + H(+). In terms of biological role, catalyzes the dephosphorylation of undecaprenyl diphosphate (UPP). Confers resistance to bacitracin. In Escherichia fergusonii (strain ATCC 35469 / DSM 13698 / CCUG 18766 / IAM 14443 / JCM 21226 / LMG 7866 / NBRC 102419 / NCTC 12128 / CDC 0568-73), this protein is Undecaprenyl-diphosphatase.